The following is a 24-amino-acid chain: DYE-linked aldehyde dehydrogenase, alpha chain (24 aa).

Heterotetramer composed of an alpha, a beta and two gamma chains. Requires Mo-molybdopterin cytosine dinucleotide as cofactor.

In terms of biological role, active with aldehydes and formate esters as substrates. The sequence is that of DYE-linked aldehyde dehydrogenase, alpha chain from Amycolatopsis methanolica.